Consider the following 843-residue polypeptide: Leucine--tRNA ligase (843 aa).

The 'HIGH' region motif lies at 61–71; sequence PYPSGDLHMGH. The short motif at 606-610 is the 'KMSKS' region element; it reads AMSKS. Lysine 609 contributes to the ATP binding site.

This sequence belongs to the class-I aminoacyl-tRNA synthetase family.

Its subcellular location is the cytoplasm. The catalysed reaction is tRNA(Leu) + L-leucine + ATP = L-leucyl-tRNA(Leu) + AMP + diphosphate. The polypeptide is Leucine--tRNA ligase (Arthrobacter sp. (strain FB24)).